The chain runs to 294 residues: UDP-3-O-acyl-N-acetylglucosamine deacetylase (294 aa).

Positions 75, 232, and 236 each coordinate Zn(2+). His-259 serves as the catalytic Proton donor.

The protein belongs to the LpxC family. It depends on Zn(2+) as a cofactor.

It carries out the reaction a UDP-3-O-[(3R)-3-hydroxyacyl]-N-acetyl-alpha-D-glucosamine + H2O = a UDP-3-O-[(3R)-3-hydroxyacyl]-alpha-D-glucosamine + acetate. The protein operates within glycolipid biosynthesis; lipid IV(A) biosynthesis; lipid IV(A) from (3R)-3-hydroxytetradecanoyl-[acyl-carrier-protein] and UDP-N-acetyl-alpha-D-glucosamine: step 2/6. Functionally, catalyzes the hydrolysis of UDP-3-O-myristoyl-N-acetylglucosamine to form UDP-3-O-myristoylglucosamine and acetate, the committed step in lipid A biosynthesis. The polypeptide is UDP-3-O-acyl-N-acetylglucosamine deacetylase (Campylobacter jejuni subsp. jejuni serotype O:23/36 (strain 81-176)).